The primary structure comprises 362 residues: Nicotinate-nucleotide--dimethylbenzimidazole phosphoribosyltransferase (362 aa).

Glu-321 (proton acceptor) is an active-site residue.

Belongs to the CobT family.

The enzyme catalyses 5,6-dimethylbenzimidazole + nicotinate beta-D-ribonucleotide = alpha-ribazole 5'-phosphate + nicotinate + H(+). Its pathway is nucleoside biosynthesis; alpha-ribazole biosynthesis; alpha-ribazole from 5,6-dimethylbenzimidazole: step 1/2. In terms of biological role, catalyzes the synthesis of alpha-ribazole-5'-phosphate from nicotinate mononucleotide (NAMN) and 5,6-dimethylbenzimidazole (DMB). This is Nicotinate-nucleotide--dimethylbenzimidazole phosphoribosyltransferase from Clostridium tetani (strain Massachusetts / E88).